Reading from the N-terminus, the 81-residue chain is Photosystem I iron-sulfur center (81 aa).

2 4Fe-4S ferredoxin-type domains span residues 2-31 and 39-68; these read SHAVKIYDTCIGCTQCVRACPLDVLEMVPW and IASSPRTEDCVGCKRCETACPTDFLSIRVY. The [4Fe-4S] cluster site is built by cysteine 11, cysteine 14, cysteine 17, cysteine 21, cysteine 48, cysteine 51, cysteine 54, and cysteine 58.

In terms of assembly, the cyanobacterial PSI reaction center is composed of one copy each of PsaA,B,C,D,E,F,I,J,K,L,M and X, and forms trimeric complexes. Requires [4Fe-4S] cluster as cofactor.

Its subcellular location is the cellular thylakoid membrane. It carries out the reaction reduced [plastocyanin] + hnu + oxidized [2Fe-2S]-[ferredoxin] = oxidized [plastocyanin] + reduced [2Fe-2S]-[ferredoxin]. Its function is as follows. Apoprotein for the two 4Fe-4S centers FA and FB of photosystem I (PSI); essential for photochemical activity. FB is the terminal electron acceptor of PSI, donating electrons to ferredoxin. The C-terminus interacts with PsaA/B/D and helps assemble the protein into the PSI complex. Required for binding of PsaD and PsaE to PSI. PSI is a plastocyanin/cytochrome c6-ferredoxin oxidoreductase, converting photonic excitation into a charge separation, which transfers an electron from the donor P700 chlorophyll pair to the spectroscopically characterized acceptors A0, A1, FX, FA and FB in turn. This is Photosystem I iron-sulfur center from Prochlorococcus marinus (strain NATL2A).